A 118-amino-acid chain; its full sequence is NADH-quinone oxidoreductase subunit A (118 aa).

The next 3 helical transmembrane spans lie at 5 to 25, 61 to 81, and 90 to 110; these read YLGI…AFAV, FLYA…YPWA, and FAIV…WYAW.

This sequence belongs to the complex I subunit 3 family. In terms of assembly, NDH-1 is composed of 14 different subunits. Subunits NuoA, H, J, K, L, M, N constitute the membrane sector of the complex.

The protein resides in the cell membrane. The enzyme catalyses a quinone + NADH + 5 H(+)(in) = a quinol + NAD(+) + 4 H(+)(out). Functionally, NDH-1 shuttles electrons from NADH, via FMN and iron-sulfur (Fe-S) centers, to quinones in the respiratory chain. The immediate electron acceptor for the enzyme in this species is believed to be a menaquinone. Couples the redox reaction to proton translocation (for every two electrons transferred, four hydrogen ions are translocated across the cytoplasmic membrane), and thus conserves the redox energy in a proton gradient. The chain is NADH-quinone oxidoreductase subunit A from Heliobacterium modesticaldum (strain ATCC 51547 / Ice1).